Here is a 2059-residue protein sequence, read N- to C-terminus: Large tegument protein deneddylase (2059 aa).

The tract at residues 1 to 230 (MRIIAGSTNQ…PDIALSLNDF (230 aa)) is deubiquitination activity. The Peptidase C76 domain occupies 3-220 (IIAGSTNQND…TILILKTYKD (218 aa)). Active-site residues include Cys-23, Asp-155, and His-157. Residues 245–272 (TNTLISKQSPSKRKQEKTSLNSNSLEKK) form a disordered region. A region of interest (interaction with inner tegument protein) is located at residue Ser-278.

It belongs to the herpesviridae large tegument protein family. Interacts with host CUL1 and CUL4A; these interactions inhibit the E3 ligase activity of cullins. Interacts with inner tegument protein. Interacts with capsid vertex specific component CVC2. Interacts with the major capsid protein/MCP.

It is found in the virion tegument. The protein localises to the host cytoplasm. The protein resides in the host nucleus. It catalyses the reaction Thiol-dependent hydrolysis of ester, thioester, amide, peptide and isopeptide bonds formed by the C-terminal Gly of ubiquitin (a 76-residue protein attached to proteins as an intracellular targeting signal).. Large tegument protein that plays multiple roles in the viral cycle. During viral entry, remains associated with the capsid while most of the tegument is detached and participates in the capsid transport toward the host nucleus. Plays a role in the routing of the capsid at the nuclear pore complex and subsequent uncoating. Within the host nucleus, acts as a deneddylase and promotes the degradation of nuclear CRLs (cullin-RING ubiquitin ligases) and thereby stabilizes nuclear CRL substrates, while cytoplasmic CRLs remain unaffected. These modifications prevent host cell cycle S-phase progression and create a favorable environment allowing efficient viral genome replication. Participates later in the secondary envelopment of capsids. Indeed, plays a linker role for the association of the outer viral tegument to the capsids together with the inner tegument protein. This is Large tegument protein deneddylase (U31) from Human herpesvirus 7 (strain JI) (HHV-7).